Here is a 116-residue protein sequence, read N- to C-terminus: Ribonuclease P protein component (116 aa).

This sequence belongs to the RnpA family. As to quaternary structure, consists of a catalytic RNA component (M1 or rnpB) and a protein subunit.

The catalysed reaction is Endonucleolytic cleavage of RNA, removing 5'-extranucleotides from tRNA precursor.. Functionally, RNaseP catalyzes the removal of the 5'-leader sequence from pre-tRNA to produce the mature 5'-terminus. It can also cleave other RNA substrates such as 4.5S RNA. The protein component plays an auxiliary but essential role in vivo by binding to the 5'-leader sequence and broadening the substrate specificity of the ribozyme. This Leuconostoc mesenteroides subsp. mesenteroides (strain ATCC 8293 / DSM 20343 / BCRC 11652 / CCM 1803 / JCM 6124 / NCDO 523 / NBRC 100496 / NCIMB 8023 / NCTC 12954 / NRRL B-1118 / 37Y) protein is Ribonuclease P protein component.